The primary structure comprises 270 residues: MDLFNAAILALIQGITEFLPISSSGHLILTPYLLGWQDQGLVFDIAANSGSLAAVMLYFRREVGQMLRGGWRLLCAPRAWRQANAESHLVLQLALATIPVGLVGLACKDWVATVARDPMIIATTSILFGLLLWWADRQGRCNNDGSALSWRQVGIIGIAQAFALIPGTSRSGVTMTAGLMLGLTREAAARFSFLMAIPVGILAALLDLKDLFAHPMQGDELYFLGVGFCVSGLSAYMVIHGLLAWLKRQTMTPFVVYRVVLGVVIFATLG.

8 helical membrane-spanning segments follow: residues 1–21 (MDLF…FLPI), 39–59 (QGLV…MLYF), 87–107 (SHLV…GLAC), 114–134 (VARD…LLWW), 147–167 (ALSW…LIPG), 193–213 (FLMA…DLFA), 223–243 (FLGV…HGLL), and 250–270 (TMTP…ATLG).

The protein belongs to the UppP family.

It is found in the cell inner membrane. It catalyses the reaction di-trans,octa-cis-undecaprenyl diphosphate + H2O = di-trans,octa-cis-undecaprenyl phosphate + phosphate + H(+). Functionally, catalyzes the dephosphorylation of undecaprenyl diphosphate (UPP). Confers resistance to bacitracin. The protein is Undecaprenyl-diphosphatase of Magnetococcus marinus (strain ATCC BAA-1437 / JCM 17883 / MC-1).